A 54-amino-acid chain; its full sequence is Ribulose bisphosphate carboxylase large chain (54 aa).

Positions M1–S2 are excised as a propeptide. N-acetylproline is present on P3. An N6,N6,N6-trimethyllysine modification is found at K14.

This sequence belongs to the RuBisCO large chain family. Type I subfamily. Heterohexadecamer of 8 large chains and 8 small chains.

It is found in the plastid. The protein resides in the chloroplast. The catalysed reaction is 2 (2R)-3-phosphoglycerate + 2 H(+) = D-ribulose 1,5-bisphosphate + CO2 + H2O. It catalyses the reaction D-ribulose 1,5-bisphosphate + O2 = 2-phosphoglycolate + (2R)-3-phosphoglycerate + 2 H(+). In terms of biological role, ruBisCO catalyzes two reactions: the carboxylation of D-ribulose 1,5-bisphosphate, the primary event in carbon dioxide fixation, as well as the oxidative fragmentation of the pentose substrate in the photorespiration process. Both reactions occur simultaneously and in competition at the same active site. The polypeptide is Ribulose bisphosphate carboxylase large chain (rbcL) (Icacina mannii).